The chain runs to 314 residues: Vacuolar membrane protein SCY_4732 (314 aa).

A disordered region spans residues 32–61; it reads KPTSSVVSETSSKSLPSLTSSAFSTSSGTT. The chain crosses the membrane as a helical span at residues 93 to 113; it reads VYIAVGAVIGAIFISILIWWL. A phosphoserine mark is found at Ser-148, Ser-254, and Ser-274. The segment at 240–309 is disordered; that stretch reads EERKLNLNRP…PSMFLDDVLN (70 aa). A compositionally biased stretch (basic and acidic residues) spans 254–269; sequence SPERKEKKINSMEGYH.

This sequence belongs to the PRM5 family.

The protein resides in the vacuole membrane. This Saccharomyces cerevisiae (strain YJM789) (Baker's yeast) protein is Vacuolar membrane protein SCY_4732.